The primary structure comprises 408 residues: MAENFVVVDGGVVAPKGFKANGHKDRKYGAALIYSETDAVAAGVFTTNKVFAHPVALSKDVLVNNSVFRAIVANSGNANCFTKGGMDDAKLLVKKAAELLNIPENQVLSASTGVIGRRMPMDIITTEVERAFENMSSENSNKNASAAIMTTDAFPKTIAVEFEVNGKSVRIGGIAKGAGMIAPNMLHATMLGFITTDIEISKEDLTNSLQKATDESFNNAVVDGDMSTNDTVYVLANAQSGVKYIDCKDKFDSALAYVSKELAKMIVSDGEGAKKLIEATVYGAETKEDAKKASMSIIRSLLLKTAVFGADPNWGRIAAAVGYSGAEMDMSNFDIIISDISLEKQAILVKSGEQIADCGTPELKLAEEIMKEDKIKIIVDLKMGSFENTAFGCDLGYDYVRINSEYTT.

Positions 150, 176, 189, 271, 403, and 408 each coordinate substrate. Threonine 189 acts as the Nucleophile in catalysis.

It belongs to the ArgJ family. Heterotetramer of two alpha and two beta chains.

Its subcellular location is the cytoplasm. The enzyme catalyses N(2)-acetyl-L-ornithine + L-glutamate = N-acetyl-L-glutamate + L-ornithine. Its pathway is amino-acid biosynthesis; L-arginine biosynthesis; L-ornithine and N-acetyl-L-glutamate from L-glutamate and N(2)-acetyl-L-ornithine (cyclic): step 1/1. Its function is as follows. Catalyzes the transfer of the acetyl group from N(2)-acetylornithine to glutamate, forming N-acetylglutamate and L-ornithine. The polypeptide is Glutamate N-acetyltransferase (Methanococcus maripaludis (strain C7 / ATCC BAA-1331)).